We begin with the raw amino-acid sequence, 1444 residues long: DNA polymerase III PolC-type (1444 aa).

One can recognise an Exonuclease domain in the interval 428–584 (YCVFDVETTG…FDAEATAYLA (157 aa)).

Belongs to the DNA polymerase type-C family. PolC subfamily.

The protein resides in the cytoplasm. It carries out the reaction DNA(n) + a 2'-deoxyribonucleoside 5'-triphosphate = DNA(n+1) + diphosphate. Required for replicative DNA synthesis. This DNA polymerase also exhibits 3' to 5' exonuclease activity. The sequence is that of DNA polymerase III PolC-type from Listeria innocua serovar 6a (strain ATCC BAA-680 / CLIP 11262).